The following is a 388-amino-acid chain: Pepsin A-5 (388 aa).

Residues 1-15 (MKWLLLLGLVALSEC) form the signal peptide. A propeptide spans 16-62 (IMYKVPLIRKKSLRRTLSERGLLKDFLKKHNLNPARKYFPQWEAPTL) (activation peptide). The Peptidase A1 domain occupies 76–385 (YFGTIGIGTP…DRANNQVGLA (310 aa)). Asp94 is a catalytic residue. Cys107 and Cys112 are joined by a disulfide. Phosphoserine is present on Ser130. The cysteines at positions 268 and 272 are disulfide-linked. Residue Asp277 is part of the active site. Residues Cys311 and Cys344 are joined by a disulfide bond.

It belongs to the peptidase A1 family.

The protein resides in the secreted. It carries out the reaction Preferential cleavage: hydrophobic, preferably aromatic, residues in P1 and P1' positions. Cleaves 1-Phe-|-Val-2, 4-Gln-|-His-5, 13-Glu-|-Ala-14, 14-Ala-|-Leu-15, 15-Leu-|-Tyr-16, 16-Tyr-|-Leu-17, 23-Gly-|-Phe-24, 24-Phe-|-Phe-25 and 25-Phe-|-Tyr-26 bonds in the B chain of insulin.. In terms of biological role, shows particularly broad specificity; although bonds involving phenylalanine and leucine are preferred, many others are also cleaved to some extent. In Homo sapiens (Human), this protein is Pepsin A-5 (PGA5).